A 278-amino-acid chain; its full sequence is Cation-dependent mannose-6-phosphate receptor (278 aa).

The N-terminal stretch at 1 to 21 (MFPFSGCWRTELLLLLLLAVA) is a signal peptide. At 22-186 (VRESWQIEEK…SLACSPEVSH (165 aa)) the chain is on the lumenal side. The region spanning 31–182 (KSCDLVGEKD…EMDSSLACSP (152 aa)) is the MRH domain. A disulfide bond links Cys-33 and Cys-79. N-linked (GlcNAc...) asparagine glycans are attached at residues Asn-58, Asn-84, Asn-95, Asn-108, and Asn-114. Cystine bridges form between Cys-133–Cys-168 and Cys-146–Cys-180. Residues 187–211 (LSVGSILLVIFASLVAVYIIGGFLY) form a helical membrane-spanning segment. The Cytoplasmic segment spans residues 212–278 (QRLVVGAKGM…EERDDHLLPM (67 aa)). The interval 257–278 (RGVGDDQLGEESEERDDHLLPM) is disordered. Ser-268 carries the phosphoserine modification.

Homodimer. Binds GGA1, GGA2 and GGA3.

It is found in the lysosome membrane. Transport of phosphorylated lysosomal enzymes from the Golgi complex and the cell surface to lysosomes. Lysosomal enzymes bearing phosphomannosyl residues bind specifically to mannose-6-phosphate receptors in the Golgi apparatus and the resulting receptor-ligand complex is transported to an acidic prelyosomal compartment where the low pH mediates the dissociation of the complex. The sequence is that of Cation-dependent mannose-6-phosphate receptor (M6pr) from Mus musculus (Mouse).